The sequence spans 370 residues: 4-hydroxy-3-methylbut-2-en-1-yl diphosphate synthase (flavodoxin) (370 aa).

Residues Cys-268, Cys-271, Cys-303, and Glu-310 each coordinate [4Fe-4S] cluster.

The protein belongs to the IspG family. The cofactor is [4Fe-4S] cluster.

It carries out the reaction (2E)-4-hydroxy-3-methylbut-2-enyl diphosphate + oxidized [flavodoxin] + H2O + 2 H(+) = 2-C-methyl-D-erythritol 2,4-cyclic diphosphate + reduced [flavodoxin]. The protein operates within isoprenoid biosynthesis; isopentenyl diphosphate biosynthesis via DXP pathway; isopentenyl diphosphate from 1-deoxy-D-xylulose 5-phosphate: step 5/6. Converts 2C-methyl-D-erythritol 2,4-cyclodiphosphate (ME-2,4cPP) into 1-hydroxy-2-methyl-2-(E)-butenyl 4-diphosphate. The sequence is that of 4-hydroxy-3-methylbut-2-en-1-yl diphosphate synthase (flavodoxin) from Bacillus cereus (strain B4264).